A 468-amino-acid chain; its full sequence is Protein wingless (468 aa).

The N-terminal stretch at 1 to 17 (MDISYIFVICLMALCSG) is a signal peptide. The binds porcupine stretch occupies residues 83 to 106 (VKGANLAISECQHQFRNRRWNCST). Cysteine 93 and cysteine 104 are disulfide-bonded. 2 N-linked (GlcNAc...) asparagine glycosylation sites follow: asparagine 103 and asparagine 108. Intrachain disulfides connect cysteine 146-cysteine 154, cysteine 156-cysteine 185, cysteine 233-cysteine 247, and cysteine 235-cysteine 242. Serine 239 is lipidated: O-palmitoleoyl serine; by PORCN. Residues 333-362 (ISKIHHPNMPSPNSLPQAGQRGGRNGRRQG) are disordered. 6 cysteine pairs are disulfide-bonded: cysteine 397–cysteine 428, cysteine 413–cysteine 423, cysteine 427–cysteine 467, cysteine 443–cysteine 458, cysteine 445–cysteine 455, and cysteine 450–cysteine 451. The N-linked (GlcNAc...) asparagine glycan is linked to asparagine 414.

Belongs to the Wnt family. As to quaternary structure, monomer; folds by intramolecular disulfide bonds. Interacts with porcupine (por). Interacts with wls; in the Golgi. Interacts with en. Interacts with the proteoglycan Cow (heparan sulfate-bound form); this stabilizes wg and promotes its extracellular distribution. Interacts with peg; the interaction facilitates short-range diffusion of wg. Palmitoleoylated by porcupine. The lipid group functions as a sorting signal, targeting the ligand to polarized vesicles that transport wg to unique sites at the cell surface. Depalmitoleoylated by notum, leading to inhibit Wnt signaling pathway. Post-translationally, major form is glycosylated at 2 sites, glycosylation is stimulated by porcupine at the ER. In terms of tissue distribution, segmented expression in embryos. In embryonic tracheal cells, expression is in stripes flanking the tracheal placode.

It is found in the secreted. The protein resides in the synapse. It localises to the membrane. The protein localises to the extracellular space. Its subcellular location is the extracellular matrix. Binds as a ligand to a family of frizzled seven-transmembrane receptors and acts through a cascade of genes on the nucleus. Segment polarity protein. May be a growth factor. Acts on neighboring cells to regulate at least one gene, the homeobox segmentation gene engrailed. Wg signal represses arm phosphorylation. Wg signaling operates by inactivating the sgg repression of engrailed autoactivation. Wg and Wnt2 have a role in the developing trachea and together are responsible for all dorsal trunk formation. Wg also acts in the developing epidermis. Acts as a morphogen, and diffuses long distances despite its lipidation. Lipophorin is required for diffusion, probably by acting as vehicle for its movement, explaining how it can spread over long distances despite its lipidation. In non-neuronal cells, wls directs wg secretion via clathrin-mediated endocytosis and the retromer complex (a conserved protein complex consisting of Vps26 and Vps35) to sustain a wls traffic loop encompassing the Golgi, the cell surface, an endocytic compartment and a retrograde route leading back to the Golgi. In neuronal cells (the larval motorneuron NMJ), wg signal moves across the synapse through the release of wls-containing exosome-like vesicles. The protein is Protein wingless (wg) of Drosophila melanogaster (Fruit fly).